We begin with the raw amino-acid sequence, 280 residues long: UPF0276 protein CC_2906 (280 aa).

Belongs to the UPF0276 family.

This is UPF0276 protein CC_2906 from Caulobacter vibrioides (strain ATCC 19089 / CIP 103742 / CB 15) (Caulobacter crescentus).